The following is a 96-amino-acid chain: SAGA-associated factor 11 (96 aa).

The segment at 68–89 (FHCKNCGRDVSANRFAAHLQRC) adopts an SGF11-type zinc-finger fold.

The protein belongs to the SGF11 family. In terms of assembly, component of the 1.8 MDa SAGA transcription coactivator-HAT complex. SAGA is built of 5 distinct domains with specialized functions. Within the SAGA complex, SUS1, SGF11, SGF73 and UBP8 form an additional subcomplex of SAGA called the DUB module (deubiquitination module). Interacts directly with SGF73, SUS1 and UBP8.

The protein localises to the nucleus. Functions as a component of the transcription regulatory histone acetylation (HAT) complex SAGA. At the promoters, SAGA is required for recruitment of the basal transcription machinery. It influences RNA polymerase II transcriptional activity through different activities such as TBP interaction and promoter selectivity, interaction with transcription activators, and chromatin modification through histone acetylation and deubiquitination. SAGA acetylates nucleosomal histone H3 to some extent (to form H3K9ac, H3K14ac, H3K18ac and H3K23ac). SAGA interacts with DNA via upstream activating sequences (UASs). Involved in transcriptional regulation of a subset of SAGA-regulated genes. Within the SAGA complex, participates in a subcomplex, that specifically deubiquitinates histones H2B. The sequence is that of SAGA-associated factor 11 from Vanderwaltozyma polyspora (strain ATCC 22028 / DSM 70294 / BCRC 21397 / CBS 2163 / NBRC 10782 / NRRL Y-8283 / UCD 57-17) (Kluyveromyces polysporus).